The sequence spans 390 residues: Ketoisovalerate reductase BEA2 (390 aa).

70-75 lines the NADP(+) pocket; that stretch reads GPGNIG. The Proton donor role is filled by lysine 285. Residues asparagine 289 and asparagine 293 each coordinate substrate.

This sequence belongs to the ketopantoate reductase family.

The catalysed reaction is (R)-2-hydroxy-3-methylbutanoate + NADP(+) = 3-methyl-2-oxobutanoate + NADPH + H(+). The reductase activity is increased by Mg(2+) (195%), Ca(2+) (169%) and slightly increased by K(+) (123%). The reduction activity is inhibited by Fe(2+) and Co(2+), and almost totally inhibited by Cu(2+), Mn(2+), Zn(2+) and Fe(3+) (from 3% to 9% residual activity respectively). The chelating agent EDTA had little effect, suggesting Mg(2+) and Ca(2+) are not determining factors, though they could promote the reductase enzyme activity. Functionally, ketoisovalerate reductase; part of the gene cluster that mediates the biosynthesis of beauvericin (BEA), a non-ribosomal cyclic hexadepsipeptide that shows antibiotic, antifungal, insecticidal, and cancer cell antiproliferative and antihaptotactic activity. Ketoisovalerate reductase BEA2 catalyzes the NADPH-specific reduction of ketoisovaleric acid to hydroxyisovalerate, a precursor for beauvericin biosynthesis. The nonribosomal cyclodepsipeptide synthetase BEA1 then catalyzes the formation of beauvericin via condensation and cyclization of 3 dipeptidol monomers, each composed of one unit of hydroxyisovalerate and one unit of N-methyl-phenylalanine. The chain is Ketoisovalerate reductase BEA2 from Gibberella intermedia (Bulb rot disease fungus).